A 207-amino-acid chain; its full sequence is Oligoribonuclease (207 aa).

The Exonuclease domain occupies 20–183; sequence LVWLDMEMTG…ADIHESIDEL (164 aa). Residue Tyr-141 is part of the active site.

This sequence belongs to the oligoribonuclease family.

It localises to the cytoplasm. 3'-to-5' exoribonuclease specific for small oligoribonucleotides. The polypeptide is Oligoribonuclease (Paraburkholderia xenovorans (strain LB400)).